The chain runs to 89 residues: Small ribosomal subunit protein uS15 (89 aa).

It belongs to the universal ribosomal protein uS15 family. In terms of assembly, part of the 30S ribosomal subunit. Forms a bridge to the 50S subunit in the 70S ribosome, contacting the 23S rRNA.

One of the primary rRNA binding proteins, it binds directly to 16S rRNA where it helps nucleate assembly of the platform of the 30S subunit by binding and bridging several RNA helices of the 16S rRNA. In terms of biological role, forms an intersubunit bridge (bridge B4) with the 23S rRNA of the 50S subunit in the ribosome. This is Small ribosomal subunit protein uS15 from Granulibacter bethesdensis (strain ATCC BAA-1260 / CGDNIH1).